We begin with the raw amino-acid sequence, 227 residues long: Large ribosomal subunit protein uL1 (227 aa).

The protein belongs to the universal ribosomal protein uL1 family. As to quaternary structure, part of the 50S ribosomal subunit.

Functionally, binds directly to 23S rRNA. The L1 stalk is quite mobile in the ribosome, and is involved in E site tRNA release. In terms of biological role, protein L1 is also a translational repressor protein, it controls the translation of the L11 operon by binding to its mRNA. This Brevibacillus brevis (strain 47 / JCM 6285 / NBRC 100599) protein is Large ribosomal subunit protein uL1.